A 196-amino-acid polypeptide reads, in one-letter code: uncharacterized protein (196 aa).

The 106-residue stretch at 58–163 (HKFFDAIKDS…IILPNNYHKN (106 aa)) folds into the Bro-N domain.

This is an uncharacterized protein from Acanthamoeba polyphaga mimivirus (APMV).